A 449-amino-acid polypeptide reads, in one-letter code: Glucose-6-phosphate isomerase (449 aa).

E291 (proton donor) is an active-site residue. Active-site residues include H312 and K426.

It belongs to the GPI family.

Its subcellular location is the cytoplasm. The enzyme catalyses alpha-D-glucose 6-phosphate = beta-D-fructose 6-phosphate. The protein operates within carbohydrate biosynthesis; gluconeogenesis. Its pathway is carbohydrate degradation; glycolysis; D-glyceraldehyde 3-phosphate and glycerone phosphate from D-glucose: step 2/4. Its function is as follows. Catalyzes the reversible isomerization of glucose-6-phosphate to fructose-6-phosphate. The polypeptide is Glucose-6-phosphate isomerase (Streptococcus pyogenes serotype M3 (strain ATCC BAA-595 / MGAS315)).